The following is a 302-amino-acid chain: UDP-N-acetylenolpyruvoylglucosamine reductase (302 aa).

The region spanning 31–213 (KIGGPADFLI…KKIREFREKR (183 aa)) is the FAD-binding PCMH-type domain. The active site involves Arg176. Ser226 serves as the catalytic Proton donor. Residue Glu296 is part of the active site.

This sequence belongs to the MurB family. Requires FAD as cofactor.

It is found in the cytoplasm. It carries out the reaction UDP-N-acetyl-alpha-D-muramate + NADP(+) = UDP-N-acetyl-3-O-(1-carboxyvinyl)-alpha-D-glucosamine + NADPH + H(+). It participates in cell wall biogenesis; peptidoglycan biosynthesis. Its function is as follows. Cell wall formation. This chain is UDP-N-acetylenolpyruvoylglucosamine reductase, found in Carboxydothermus hydrogenoformans (strain ATCC BAA-161 / DSM 6008 / Z-2901).